The sequence spans 338 residues: Ketol-acid reductoisomerase (NADP(+)) (338 aa).

In terms of domain architecture, KARI N-terminal Rossmann spans 1–181 (MKVFYDKDAD…GGGRAGIIET (181 aa)). Residues 24–27 (YGSQ), arginine 47, and serine 52 each bind NADP(+). The active site involves histidine 107. Residue glycine 133 coordinates NADP(+). Positions 182–327 (NFREETETDL…AKLRAMMPWI (146 aa)) constitute a KARI C-terminal knotted domain. Residues aspartate 190, glutamate 194, glutamate 226, and glutamate 230 each coordinate Mg(2+). Substrate is bound at residue serine 251.

The protein belongs to the ketol-acid reductoisomerase family. It depends on Mg(2+) as a cofactor.

The catalysed reaction is (2R)-2,3-dihydroxy-3-methylbutanoate + NADP(+) = (2S)-2-acetolactate + NADPH + H(+). It catalyses the reaction (2R,3R)-2,3-dihydroxy-3-methylpentanoate + NADP(+) = (S)-2-ethyl-2-hydroxy-3-oxobutanoate + NADPH + H(+). It participates in amino-acid biosynthesis; L-isoleucine biosynthesis; L-isoleucine from 2-oxobutanoate: step 2/4. It functions in the pathway amino-acid biosynthesis; L-valine biosynthesis; L-valine from pyruvate: step 2/4. Its function is as follows. Involved in the biosynthesis of branched-chain amino acids (BCAA). Catalyzes an alkyl-migration followed by a ketol-acid reduction of (S)-2-acetolactate (S2AL) to yield (R)-2,3-dihydroxy-isovalerate. In the isomerase reaction, S2AL is rearranged via a Mg-dependent methyl migration to produce 3-hydroxy-3-methyl-2-ketobutyrate (HMKB). In the reductase reaction, this 2-ketoacid undergoes a metal-dependent reduction by NADPH to yield (R)-2,3-dihydroxy-isovalerate. The sequence is that of Ketol-acid reductoisomerase (NADP(+)) from Polynucleobacter necessarius subsp. necessarius (strain STIR1).